The chain runs to 123 residues: Ribosome-binding factor A (123 aa).

Belongs to the RbfA family. Monomer. Binds 30S ribosomal subunits, but not 50S ribosomal subunits or 70S ribosomes.

Its subcellular location is the cytoplasm. In terms of biological role, one of several proteins that assist in the late maturation steps of the functional core of the 30S ribosomal subunit. Associates with free 30S ribosomal subunits (but not with 30S subunits that are part of 70S ribosomes or polysomes). Required for efficient processing of 16S rRNA. May interact with the 5'-terminal helix region of 16S rRNA. This is Ribosome-binding factor A from Acetivibrio thermocellus (strain ATCC 27405 / DSM 1237 / JCM 9322 / NBRC 103400 / NCIMB 10682 / NRRL B-4536 / VPI 7372) (Clostridium thermocellum).